Here is a 73-residue protein sequence, read N- to C-terminus: UPF0154 protein BCG9842_B1526 (73 aa).

The chain crosses the membrane as a helical span at residues isoleucine 3–phenylalanine 23.

Belongs to the UPF0154 family.

The protein resides in the cell membrane. The protein is UPF0154 protein BCG9842_B1526 of Bacillus cereus (strain G9842).